The sequence spans 351 residues: Nicotinate-nucleotide--dimethylbenzimidazole phosphoribosyltransferase (351 aa).

Residue Glu-317 is the Proton acceptor of the active site.

This sequence belongs to the CobT family.

It carries out the reaction 5,6-dimethylbenzimidazole + nicotinate beta-D-ribonucleotide = alpha-ribazole 5'-phosphate + nicotinate + H(+). It functions in the pathway nucleoside biosynthesis; alpha-ribazole biosynthesis; alpha-ribazole from 5,6-dimethylbenzimidazole: step 1/2. Catalyzes the synthesis of alpha-ribazole-5'-phosphate from nicotinate mononucleotide (NAMN) and 5,6-dimethylbenzimidazole (DMB). This is Nicotinate-nucleotide--dimethylbenzimidazole phosphoribosyltransferase from Pseudomonas putida (strain W619).